The chain runs to 494 residues: Serine/threonine-protein kinase PBL13 (494 aa).

Residue Cys4 is the site of S-palmitoyl cysteine attachment. Residue Thr65 is modified to Phosphothreonine. One can recognise a Protein kinase domain in the interval 76 to 356 (FSSSNFLGEG…STVVSVLQDI (281 aa)). ATP-binding positions include 82–90 (LGEGGFGPV) and Lys111. Residue Tyr156 is modified to Phosphotyrosine. The active-site Proton acceptor is Asp206. Ser210 is subject to Phosphoserine. A Phosphoserine; by autocatalysis modification is found at Ser240. Phosphothreonine occurs at positions 241 and 246. Position 254 is a phosphotyrosine (Tyr254). The residue at position 321 (Ser321) is a Phosphoserine; by autocatalysis. Thr323 and Thr383 each carry phosphothreonine; by autocatalysis. Position 384 is a phosphoserine; by autocatalysis (Ser384). A phosphothreonine; by autocatalysis mark is found at Thr395, Thr398, Thr406, Thr413, Thr421, and Thr428. A Phosphoserine; by autocatalysis modification is found at Ser429. A disordered region spans residues 434–471 (DKTRREVKETSLQNFDKPRNVSTTDNHQKFRSPAHTAR). Residue Thr443 is modified to Phosphothreonine; by autocatalysis. Polar residues predominate over residues 443–458 (TSLQNFDKPRNVSTTD). Phosphoserine; by autocatalysis is present on residues Ser444 and Ser455. Thr456 carries the phosphothreonine; by autocatalysis modification. Residues 462-471 (KFRSPAHTAR) are compositionally biased toward basic residues. Tyr481 is subject to Phosphotyrosine; by autocatalysis.

The protein belongs to the protein kinase superfamily. Ser/Thr protein kinase family. As to quaternary structure, interacts with RBHOD. Interaction is disrupted by flagellin-induced immune signaling.

It localises to the cell membrane. It catalyses the reaction L-seryl-[protein] + ATP = O-phospho-L-seryl-[protein] + ADP + H(+). It carries out the reaction L-threonyl-[protein] + ATP = O-phospho-L-threonyl-[protein] + ADP + H(+). In terms of biological role, involved in defense responses. Acts as a negative regulator of plant immune responses. The polypeptide is Serine/threonine-protein kinase PBL13 (Arabidopsis thaliana (Mouse-ear cress)).